Reading from the N-terminus, the 372-residue chain is 18-hydroxynorfluorocurarine reductase (372 aa).

Cys47, Asp50, His69, Glu70, Cys100, Cys103, Cys106, Cys114, and Cys172 together coordinate Zn(2+). NADP(+) is bound by residues 197–202 (GLGGIG), Lys226, 283–285 (LGA), Ser307, and Arg354.

It belongs to the zinc-containing alcohol dehydrogenase family. As to quaternary structure, homodimer. Zn(2+) is required as a cofactor. As to expression, mainly expressed in roots.

The enzyme catalyses (19E)-cur-19-en-17-al + NADP(+) = norfluorocurarine + NADPH + H(+). It catalyses the reaction 17,18-epoxy-17-hydroxycur-19-ene + NADP(+) = 18-hydroxynorfluorocurarine + NADPH + H(+). It participates in alkaloid biosynthesis. Its function is as follows. Alcohol dehydrogenase involved in the biosynthesis of curare monoterpene indole alkaloids (MIAs), natural products such as strychnine, a neurotoxic compound used as a pesticide to control rodents, and its pharmacologically active derivatives, including brucine, used to regulate blood pressure. Curare alkaloids act as animal glycine receptor antagonists. Catalyzes the conversion of norfluorocurarine to desoxy Wieland-Gumlich aldehyde, and of 18-OH norfluorocurarine to Wieland-Gumlich aldehyde. The sequence is that of 18-hydroxynorfluorocurarine reductase from Strychnos nux-vomica (Poison nut).